Here is a 420-residue protein sequence, read N- to C-terminus: MAFCGTRTAARLSHSTRALHNTHRNFASQRTLNEVVIASAARTPIGSFQGTLSSLPATKLGSIAIKAAVERAGIPADEVKEVYMGNVLQAGQGQAPSRQATLGAGLAISTPTTTINKVCASGMKSVMLAAQSLMCGHQQVMVAGGMESMSNVPYCMSRGATPYGGVKLEDLIVKDGLTDVYNKIHMGNCAENTAKKFSISREEQDSFAIHSYTRSKAAWDSGLIANEIAPVTIAQKGKPDIIVQEDEEYKRVDFSKFPKLKTVFQKDNGTVTAANSSTLNDGAAALLLMTTEAANRLNVTPLARIVAFADAAVDPIDFPIAPAYAVPKLLSEAGLKKEDIAMWEINEAFSVVVLANIKMLGIDPARVNMNGGAVSLGHPIGMSGARIVGHMAHALKKGQFGIAGICNGGGGASAVLIEKL.

The transit peptide at 1 to 33 (MAFCGTRTAARLSHSTRALHNTHRNFASQRTLN) directs the protein to the mitochondrion. Catalysis depends on cysteine 119, which acts as the Acyl-thioester intermediate. Residues tyrosine 212, 251 to 253 (RVD), and lysine 256 contribute to the CoA site. K(+) is bound at residue tyrosine 212. Alanine 273 and alanine 274 together coordinate K(+). Serine 277 is a binding site for CoA. Valine 374 provides a ligand contact to K(+). Cysteine 406 (proton donor/acceptor) is an active-site residue.

It belongs to the thiolase-like superfamily. Thiolase family. In terms of assembly, homotetramer.

It is found in the mitochondrion. It carries out the reaction 2 acetyl-CoA = acetoacetyl-CoA + CoA. It catalyses the reaction propanoyl-CoA + acetyl-CoA = 2-methyl-3-oxobutanoyl-CoA + CoA. It participates in lipid metabolism; fatty acid beta-oxidation. In terms of biological role, this is one of the enzymes that catalyzes the last step of the mitochondrial beta-oxidation pathway, an aerobic process breaking down fatty acids into acetyl-CoA. Using free coenzyme A/CoA, catalyzes the thiolytic cleavage of medium- to long-chain 3-oxoacyl-CoAs into acetyl-CoA and a fatty acyl-CoA shortened by two carbon atoms. The activity of the enzyme is reversible and it can also catalyze the condensation of two acetyl-CoA molecules into acetoacetyl-CoA. Thereby, it plays a major role in ketone body metabolism. This Xenopus laevis (African clawed frog) protein is Acetyl-CoA acetyltransferase A, mitochondrial (acat1-a).